Reading from the N-terminus, the 228-residue chain is Glutamate transport system permease protein GluC (228 aa).

5 helical membrane-spanning segments follow: residues 16-36, 64-84, 100-120, 145-165, and 195-215; these read FWVT…FGTI, LTLV…LTLA, AVLG…RSGI, IIFP…LIAL, and LFVV…PMGL. The ABC transmembrane type-1 domain occupies 16 to 217; sequence FWVTIKLTIY…ILTLPMGLGL (202 aa).

The protein belongs to the binding-protein-dependent transport system permease family. HisMQ subfamily. As to quaternary structure, the complex is composed of two ATP-binding proteins (GluA), two transmembrane proteins (GluC and GluD) and a solute-binding protein (GluB).

Its subcellular location is the cell membrane. Part of the ABC transporter complex GluABCD involved in glutamate uptake. Probably responsible for the translocation of the substrate across the membrane. This is Glutamate transport system permease protein GluC from Corynebacterium glutamicum (strain ATCC 13032 / DSM 20300 / JCM 1318 / BCRC 11384 / CCUG 27702 / LMG 3730 / NBRC 12168 / NCIMB 10025 / NRRL B-2784 / 534).